The chain runs to 106 residues: Large ribosomal subunit protein eL42 (106 aa).

Residues 34–53 (YAQGKRRYDRKQSGYGGQTK) form a disordered region.

Belongs to the eukaryotic ribosomal protein eL42 family. As to quaternary structure, component of the large ribosomal subunit.

Its subcellular location is the cytoplasm. Component of the large ribosomal subunit. The ribosome is a large ribonucleoprotein complex responsible for the synthesis of proteins in the cell. The chain is Large ribosomal subunit protein eL42 (Rpl36a) from Canis lupus familiaris (Dog).